Consider the following 100-residue polypeptide: Urease subunit gamma (100 aa).

This sequence belongs to the urease gamma subunit family. In terms of assembly, heterotrimer of UreA (gamma), UreB (beta) and UreC (alpha) subunits. Three heterotrimers associate to form the active enzyme.

The protein localises to the cytoplasm. It carries out the reaction urea + 2 H2O + H(+) = hydrogencarbonate + 2 NH4(+). It participates in nitrogen metabolism; urea degradation; CO(2) and NH(3) from urea (urease route): step 1/1. The sequence is that of Urease subunit gamma from Acinetobacter baylyi (strain ATCC 33305 / BD413 / ADP1).